The primary structure comprises 346 residues: Dihydroorotase (346 aa).

Zn(2+)-binding residues include H17 and H19. Substrate is bound by residues 19–21 (HLR) and N45. K103, H140, and H178 together coordinate Zn(2+). Residue K103 is modified to N6-carboxylysine. A substrate-binding site is contributed by H140. Substrate is bound at residue L223. Zn(2+) is bound at residue D251. Residue D251 is part of the active site. Substrate is bound by residues H255 and A267.

Belongs to the metallo-dependent hydrolases superfamily. DHOase family. Class II DHOase subfamily. Homodimer. It depends on Zn(2+) as a cofactor.

The catalysed reaction is (S)-dihydroorotate + H2O = N-carbamoyl-L-aspartate + H(+). Its pathway is pyrimidine metabolism; UMP biosynthesis via de novo pathway; (S)-dihydroorotate from bicarbonate: step 3/3. Catalyzes the reversible cyclization of carbamoyl aspartate to dihydroorotate. This Synechococcus sp. (strain RCC307) protein is Dihydroorotase.